The primary structure comprises 908 residues: MRPAAPGTTPNGASSDIRHQRGVAPIPFGSTNSAIDAHHNSEIRVGRHRAKLDEIRESLKAYEHEAGLLSSHVALGSLATPSSSSVSHSDITNDNAEVMNFSSSSSNAAATTTTVSSAAVSNSNSFRTEGGGHKMRITPMPQRHLMMDTGANETVFRSGKEMIRNGNPSTTISSTPSTTTEESIRIHPAGYRYDMPTPAYHMNNNAPQYSPGYSRPPPPAYDSSPVNTRMTPVATDNYRTHLHMKVHPVVKAPPPNPTMLNHNKNMAPPPPPPAKSTISIETMSEERKADNIQRLYHTSMDKKTASSVVSINVASPHTTKVNVGDSPLPSKSFIIGPRYTADVDRKNFVNYKDELRPDPRLIPSTSDANHEDFRPILFKPRNLEITMKSRAQPPPPQYNQPSEPPPKRVSSPIDRTLLEPYIKNTRRVQPCKPNMLRFYMEQHVERLLQQYKEREKRMKQLEKEMVSAQLPDIMRNKMLGLLQQKESKYTRLRRQKMSKSHFTVISHIGVGAFGKVSLVRKNDTRKVYAMKSLEKADVIMKQQAAHVKAERDILAEADSPWIVRLFFSFQDDACLYFIMEYVPGGDMMTLLIQKGIFEEDLARFYIAELACAIEYVHNVGFIHRDLKPDNILIDQHGHIKLTDFGLCTGLRWTHDRRYYGPENDHHRVDSFSLPPEVAAIDKSVKVLNVRQQTRRITAHSLVGTGNYMAPEVIAKTGHNQSCDWWSTGVILYEMVFGRVPFHDDTPGGTQHRIKNWRNFLDFTYCGNLSKECLMMIQQLICDASSRLGSHGKDVAERTAQVKNHPWFRGIDWVNLRKLRADYIYIPRVTHDEDTSNFETFQDNDRADKPNVRGLHNPAFYEFTYRHFFDTDSVGCPSLRPSRRRSLRPLLENGTFNESVSEEDSSSHI.

Residues E42–S70 are a coiled coil. Low complexity-rich tracts occupy residues V115–S125 and P168–E181. 4 disordered regions span residues V115–K134, M162–S183, N203–P225, and K388–P412. Over residues Q392–P404 the composition is skewed to pro residues. Positions Y439 to L470 form a coiled coil. Residues F502–F807 enclose the Protein kinase domain. ATP contacts are provided by residues I508–V516 and K531. D625 serves as the catalytic Proton acceptor. An AGC-kinase C-terminal domain is found at R808–G874.

It belongs to the protein kinase superfamily. AGC Ser/Thr protein kinase family. In terms of assembly, interacts (via N-terminus) with yap-1 (via WW domain). The cofactor is Mg(2+). As to expression, expressed in muscles and epithelial tissues including pharynx, intestine and hypodermis. Expressed in vulval and spermathecal seam cells.

Its subcellular location is the cytoplasm. The protein resides in the apical cell membrane. The enzyme catalyses L-seryl-[protein] + ATP = O-phospho-L-seryl-[protein] + ADP + H(+). It carries out the reaction L-threonyl-[protein] + ATP = O-phospho-L-threonyl-[protein] + ADP + H(+). Functionally, phosphorylates yap-1 which may negatively regulate yap-1 nuclear localization. Plays an essential role in larval development. Regulates growth, the formation of gut granules, lifespan and cell and body sizes probably in synergy with the TGF-beta sma/mab pathway. Does not appear to regulate apoptosis and proliferation. In addition, may synergize with the TGF-beta daf-7 dauer pathway to regulate entry into the dauer stage. Maintains the cellular integrity of intestinal cells by regulating the localization of apical actin and junctional proteins. This chain is Serine/threonine-protein kinase WARTS homolog, found in Caenorhabditis elegans.